A 474-amino-acid chain; its full sequence is 3-isopropylmalate dehydratase large subunit (474 aa).

[4Fe-4S] cluster-binding residues include C350, C415, and C418.

Belongs to the aconitase/IPM isomerase family. LeuC type 1 subfamily. Heterodimer of LeuC and LeuD. It depends on [4Fe-4S] cluster as a cofactor.

It carries out the reaction (2R,3S)-3-isopropylmalate = (2S)-2-isopropylmalate. Its pathway is amino-acid biosynthesis; L-leucine biosynthesis; L-leucine from 3-methyl-2-oxobutanoate: step 2/4. Catalyzes the isomerization between 2-isopropylmalate and 3-isopropylmalate, via the formation of 2-isopropylmaleate. This chain is 3-isopropylmalate dehydratase large subunit, found in Phenylobacterium zucineum (strain HLK1).